Consider the following 257-residue polypeptide: Pyrroline-5-carboxylate reductase (257 aa).

Belongs to the pyrroline-5-carboxylate reductase family.

The protein resides in the cytoplasm. The catalysed reaction is L-proline + NADP(+) = (S)-1-pyrroline-5-carboxylate + NADPH + 2 H(+). It carries out the reaction L-proline + NAD(+) = (S)-1-pyrroline-5-carboxylate + NADH + 2 H(+). Its pathway is amino-acid biosynthesis; L-proline biosynthesis; L-proline from L-glutamate 5-semialdehyde: step 1/1. Its function is as follows. Catalyzes the reduction of 1-pyrroline-5-carboxylate (PCA) to L-proline. This chain is Pyrroline-5-carboxylate reductase, found in Helicobacter pylori (strain J99 / ATCC 700824) (Campylobacter pylori J99).